A 720-amino-acid chain; its full sequence is Replication restart protein PriA (720 aa).

The Helicase ATP-binding domain occupies 200 to 366; it reads ILMKNCFTSW…LHKKCFYIKF (167 aa). 213–220 provides a ligand contact to ATP; the sequence is KNNFYLKV. Residues 309–312 carry the DEAH box motif; sequence NQEH. Positions 425, 428, 434, 437, 452, 455, 465, and 468 each coordinate Zn(2+).

Belongs to the helicase family. PriA subfamily. As to quaternary structure, component of the replication restart primosome. It depends on Zn(2+) as a cofactor.

It catalyses the reaction Couples ATP hydrolysis with the unwinding of duplex DNA by translocating in the 3'-5' direction.. It carries out the reaction ATP + H2O = ADP + phosphate + H(+). In terms of biological role, initiates the restart of stalled replication forks, which reloads the replicative helicase on sites other than the origin of replication. Recognizes and binds to abandoned replication forks and remodels them to uncover a helicase loading site. Promotes assembly of the primosome at these replication forks. The protein is Replication restart protein PriA of Buchnera aphidicola subsp. Schizaphis graminum (strain Sg).